We begin with the raw amino-acid sequence, 129 residues long: M-zodatoxin-Lt8j (129 aa).

The N-terminal stretch at 1–20 (MKYFVVALALVAAFACIAES) is a signal peptide. A propeptide spanning residues 21 to 60 (KPAESEHELAEVEEENELADLEDAVWLEHLADLSDLEEAR) is cleaved from the precursor.

It belongs to the cationic peptide 06 (cytoinsectotoxin) family. In terms of tissue distribution, expressed by the venom gland.

It is found in the secreted. Insecticidal, cytolytic and antimicrobial peptide. Forms voltage-dependent, ion-permeable channels in membranes. At high concentration causes cell membrane lysis. This is M-zodatoxin-Lt8j (cit 1-9) from Lachesana tarabaevi (Spider).